We begin with the raw amino-acid sequence, 153 residues long: Transcriptional repressor NrdR (153 aa).

A zinc finger lies at Cys-3–Cys-34. The region spanning Leu-49 to Arg-136 is the ATP-cone domain.

Belongs to the NrdR family. Zn(2+) is required as a cofactor.

Functionally, negatively regulates transcription of bacterial ribonucleotide reductase nrd genes and operons by binding to NrdR-boxes. The polypeptide is Transcriptional repressor NrdR (Thermus thermophilus (strain ATCC BAA-163 / DSM 7039 / HB27)).